The primary structure comprises 87 residues: Small ribosomal subunit protein uS12m (87 aa).

Belongs to the universal ribosomal protein uS12 family.

The protein localises to the mitochondrion matrix. Its subcellular location is the kinetoplast. Protein S12 is involved in the translation initiation step. This chain is Small ribosomal subunit protein uS12m (RPS12), found in Trypanoplasma borreli.